A 357-amino-acid polypeptide reads, in one-letter code: MSAPTILIMAGGTGGHIMPGLAVAEVLRERGWRVLWLGNPDKMEGRLVPPRGIELVPLRFQGVRGRGAAALLKLPFLLARACAQAWRRLADIRPDVVLGMGGYVAFPGGVMAALRRMPLVVHEQNAVAGTANRWLARLARRVLSGFPGVLPRGEALGNPVRADLCALPEPAERYAGRSGALRVLVVGGSLGAHALNTTVPQALALLPEQARPQVVHQAGEQHLPALQQAYAQAGVQADCRAFIDDMAGAMAQADLLICRAGAMTVSEVAAAGVAALFVPFPHAIDDHQTANARFLSDAQAAWLQPQATLTPQWLAQWLGQRTRQELQAVAGRARTHALPRAAAHIADVCEQAARRAS.

UDP-N-acetyl-alpha-D-glucosamine-binding positions include 13–15 (TGG), Asn125, Arg161, Ser189, Ile243, and Gln288.

This sequence belongs to the glycosyltransferase 28 family. MurG subfamily.

The protein localises to the cell inner membrane. The catalysed reaction is di-trans,octa-cis-undecaprenyl diphospho-N-acetyl-alpha-D-muramoyl-L-alanyl-D-glutamyl-meso-2,6-diaminopimeloyl-D-alanyl-D-alanine + UDP-N-acetyl-alpha-D-glucosamine = di-trans,octa-cis-undecaprenyl diphospho-[N-acetyl-alpha-D-glucosaminyl-(1-&gt;4)]-N-acetyl-alpha-D-muramoyl-L-alanyl-D-glutamyl-meso-2,6-diaminopimeloyl-D-alanyl-D-alanine + UDP + H(+). It functions in the pathway cell wall biogenesis; peptidoglycan biosynthesis. In terms of biological role, cell wall formation. Catalyzes the transfer of a GlcNAc subunit on undecaprenyl-pyrophosphoryl-MurNAc-pentapeptide (lipid intermediate I) to form undecaprenyl-pyrophosphoryl-MurNAc-(pentapeptide)GlcNAc (lipid intermediate II). This chain is UDP-N-acetylglucosamine--N-acetylmuramyl-(pentapeptide) pyrophosphoryl-undecaprenol N-acetylglucosamine transferase, found in Bordetella parapertussis (strain 12822 / ATCC BAA-587 / NCTC 13253).